A 400-amino-acid polypeptide reads, in one-letter code: Multiphosphoryl transfer protein (400 aa).

The PTS EIIA type-2 domain occupies 2 to 142 (LELTTQDIQL…QQIIAIIKGE (141 aa)). Residue His62 is the Tele-phosphohistidine intermediate; for EIIA activity of the active site. A Phosphohistidine; by HPr modification is found at His62. The HPr domain occupies 310–400 (AHTATFRIKN…VAINAGLGEG (91 aa)). His324 acts as the Pros-phosphohistidine intermediate; for HPr activity in catalysis. A Phosphohistidine; by EI modification is found at His324.

It localises to the cytoplasm. Functionally, the phosphoenolpyruvate-dependent sugar phosphotransferase system (sugar PTS), a major carbohydrate active transport system, catalyzes the phosphorylation of incoming sugar substrates concomitantly with their translocation across the cell membrane. The enzyme II FruAB PTS system is involved in fructose transport. In Vibrio cholerae serotype O1 (strain ATCC 39315 / El Tor Inaba N16961), this protein is Multiphosphoryl transfer protein.